The chain runs to 437 residues: Elongator complex protein 4 (437 aa).

Residues 179–247 (FSKSSSPTTP…TKTGSQDSPL (69 aa)) are disordered. Residues 181 to 192 (KSSSPTTPSLEQ) are compositionally biased toward polar residues. S183 is subject to Phosphoserine. Over residues 220–237 (SANNNNNNNNNSSSVTSS) the composition is skewed to low complexity. Position 242 is a phosphoserine (S242).

Belongs to the ELP4 family. Component of the elongator complex composed of Elp1, Elp2, Elp3, Elp4, Elp5 and Elp6. The elongator complex associates with and stabilizes microtubules; efficient interaction requires the full complex.

The protein localises to the cytoplasm. Its subcellular location is the nucleus. It localises to the cytoskeleton. It is found in the spindle. The protein operates within tRNA modification; 5-methoxycarbonylmethyl-2-thiouridine-tRNA biosynthesis. Its function is as follows. Component of the elongator complex, which is required for multiple tRNA modifications, including mcm5U (5-methoxycarbonylmethyl uridine), mcm5s2U (5-methoxycarbonylmethyl-2-thiouridine), and ncm5U (5-carbamoylmethyl uridine). The elongator complex catalyzes the formation of carboxymethyluridine in the wobble base at position 34 in tRNAs. Binding by the elongator complex stabilizes microtubules and promotes their growth. This induces central spindle asymmetry, promoting polarized signaling endosome trafficking during asymmetric cell division and cell fate assignation of sensory organ precursor cells. The chain is Elongator complex protein 4 from Drosophila melanogaster (Fruit fly).